The primary structure comprises 908 residues: Probable RNA-directed DNA polymerase from transposon X-element (908 aa).

A Reverse transcriptase domain is found at 481–752; that stretch reads AIVRLQYFPY…NAAKYLGVLL (272 aa). Residues 883-908 are disordered; the sequence is RPPRRLNRRQPRDLITRSPLTRVRRS.

Mg(2+) serves as cofactor. It depends on Mn(2+) as a cofactor.

The catalysed reaction is DNA(n) + a 2'-deoxyribonucleoside 5'-triphosphate = DNA(n+1) + diphosphate. In Drosophila melanogaster (Fruit fly), this protein is Probable RNA-directed DNA polymerase from transposon X-element (X-element\ORF2).